A 199-amino-acid chain; its full sequence is 7-methyl-GTP pyrophosphatase (199 aa).

D74 (proton acceptor) is an active-site residue.

This sequence belongs to the Maf family. YceF subfamily. It depends on a divalent metal cation as a cofactor.

The protein localises to the cytoplasm. The catalysed reaction is N(7)-methyl-GTP + H2O = N(7)-methyl-GMP + diphosphate + H(+). Functionally, nucleoside triphosphate pyrophosphatase that hydrolyzes 7-methyl-GTP (m(7)GTP). May have a dual role in cell division arrest and in preventing the incorporation of modified nucleotides into cellular nucleic acids. The protein is 7-methyl-GTP pyrophosphatase of Albidiferax ferrireducens (strain ATCC BAA-621 / DSM 15236 / T118) (Rhodoferax ferrireducens).